The sequence spans 255 residues: Thiazole synthase (255 aa).

K96 functions as the Schiff-base intermediate with DXP in the catalytic mechanism. 1-deoxy-D-xylulose 5-phosphate-binding positions include G157, 183-184 (AG), and 205-206 (NT).

It belongs to the ThiG family. As to quaternary structure, homotetramer. Forms heterodimers with either ThiH or ThiS.

It is found in the cytoplasm. It carries out the reaction [ThiS sulfur-carrier protein]-C-terminal-Gly-aminoethanethioate + 2-iminoacetate + 1-deoxy-D-xylulose 5-phosphate = [ThiS sulfur-carrier protein]-C-terminal Gly-Gly + 2-[(2R,5Z)-2-carboxy-4-methylthiazol-5(2H)-ylidene]ethyl phosphate + 2 H2O + H(+). It participates in cofactor biosynthesis; thiamine diphosphate biosynthesis. In terms of biological role, catalyzes the rearrangement of 1-deoxy-D-xylulose 5-phosphate (DXP) to produce the thiazole phosphate moiety of thiamine. Sulfur is provided by the thiocarboxylate moiety of the carrier protein ThiS. In vitro, sulfur can be provided by H(2)S. The chain is Thiazole synthase from Staphylococcus epidermidis (strain ATCC 12228 / FDA PCI 1200).